The following is a 293-amino-acid chain: LysM and putative peptidoglycan-binding domain-containing protein 4 (293 aa).

Residues 1–214 (MRQKEVLAKS…VADGADCGIQ (214 aa)) lie on the Extracellular side of the membrane. The interval 28-65 (FNNGSGDSGDSSEEESHQVVLRPRGKEHQKNSSQRPGA) is disordered. N30 is a glycosylation site (N-linked (GlcNAc...) asparagine). A LysM domain is found at 71 to 115 (LQRELAQEDSLNKLALQYGCKVADIKKANNFIREQDLYALKSIKI). The helical transmembrane segment at 215-235 (WWNAVFLMLLIGIVLPVFYLV) threads the bilayer. Over 236-293 (YFKIQATGEPSNGLNATVVPNGSMTLSPVPGQAPRLAIPVPTLPASDSQVSPTTQAGA) the chain is Cytoplasmic.

The protein resides in the membrane. In Mus musculus (Mouse), this protein is LysM and putative peptidoglycan-binding domain-containing protein 4 (Lysmd4).